We begin with the raw amino-acid sequence, 183 residues long: ATP synthase subunit delta (183 aa).

Belongs to the ATPase delta chain family. F-type ATPases have 2 components, F(1) - the catalytic core - and F(0) - the membrane proton channel. F(1) has five subunits: alpha(3), beta(3), gamma(1), delta(1), epsilon(1). F(0) has three main subunits: a(1), b(2) and c(10-14). The alpha and beta chains form an alternating ring which encloses part of the gamma chain. F(1) is attached to F(0) by a central stalk formed by the gamma and epsilon chains, while a peripheral stalk is formed by the delta and b chains.

Its subcellular location is the cell inner membrane. Its function is as follows. F(1)F(0) ATP synthase produces ATP from ADP in the presence of a proton or sodium gradient. F-type ATPases consist of two structural domains, F(1) containing the extramembraneous catalytic core and F(0) containing the membrane proton channel, linked together by a central stalk and a peripheral stalk. During catalysis, ATP synthesis in the catalytic domain of F(1) is coupled via a rotary mechanism of the central stalk subunits to proton translocation. In terms of biological role, this protein is part of the stalk that links CF(0) to CF(1). It either transmits conformational changes from CF(0) to CF(1) or is implicated in proton conduction. This is ATP synthase subunit delta from Desulfatibacillum aliphaticivorans.